Consider the following 292-residue polypeptide: Malectin (292 aa).

The signal sequence occupies residues 1–28 (MLGAWAVEGTAVALLRLLLLLLPPAIRG). The Lumenal portion of the chain corresponds to 29-269 (PGLGVAGVAG…TPNPYASDNS (241 aa)). Residues tyrosine 82, tyrosine 104, tyrosine 131, phenylalanine 132, and aspartate 201 each contribute to the a carbohydrate site. Positions 221–265 (LQPHPGLEKKEEEEEEEEYDEGSNLKKQTNKNRVQSGPRTPNPYA) are disordered. A compositionally biased stretch (acidic residues) spans 231 to 241 (EEEEEEEEYDE). The span at 245-265 (LKKQTNKNRVQSGPRTPNPYA) shows a compositional bias: polar residues. Asparagine 268 is a glycosylation site (N-linked (GlcNAc...) asparagine). Residues 270 to 290 (SLMFPILVAFGVFIPTLFCLC) form a helical membrane-spanning segment. The Cytoplasmic portion of the chain corresponds to 291–292 (RL).

The protein belongs to the malectin family. As to quaternary structure, interacts with the oligosaccharyltransferase (OST) complex.

The protein localises to the endoplasmic reticulum membrane. Functionally, carbohydrate-binding protein with a strong ligand preference for Glc2-N-glycan. May play a role in the early steps of protein N-glycosylation. The sequence is that of Malectin from Homo sapiens (Human).